Consider the following 202-residue polypeptide: Small ribosomal subunit protein uS4c (202 aa).

The 69-residue stretch at 90-158 (MRSDNVIFRL…ISKNIELYQK (69 aa)) folds into the S4 RNA-binding domain.

Belongs to the universal ribosomal protein uS4 family. In terms of assembly, part of the 30S ribosomal subunit. Contacts protein S5. The interaction surface between S4 and S5 is involved in control of translational fidelity.

The protein localises to the plastid. The protein resides in the chloroplast. Its function is as follows. One of the primary rRNA binding proteins, it binds directly to 16S rRNA where it nucleates assembly of the body of the 30S subunit. Functionally, with S5 and S12 plays an important role in translational accuracy. The polypeptide is Small ribosomal subunit protein uS4c (rps4) (Anthoceros punctatus (Hornwort)).